Reading from the N-terminus, the 47-residue chain is Bacteriocin curvaticin DN317 (47 aa).

Belongs to the bacteriocin class IIA/YGNGV family.

The protein resides in the secreted. Has bactericidal activity against various Gram-negative Campylobacter, and the Gram-positive L.monocytogenes and B.subtilis. In vitro, inhibits C.jejuni strain ATCC 33560 (MIC=27.3 ug/ml). The sequence is that of Bacteriocin curvaticin DN317 from Latilactobacillus curvatus (Lactobacillus curvatus).